A 374-amino-acid chain; its full sequence is Phosphate-binding protein PstS1 (374 aa).

The first 23 residues, 1-23 (MKIRLHTLLAVLTAAPLLLAAAG), serve as a signal peptide directing secretion. Cys-24 carries N-palmitoyl cysteine lipidation. Residue Cys-24 is the site of S-diacylglycerol cysteine attachment. The tract at residues 25–48 (GSKPPSGSPETGAGAGTVATTPAS) is disordered. Phosphate is bound by residues 58-60 (STL), Ser-88, Asp-106, and 189-191 (SGD).

The protein belongs to the PstS family. In terms of assembly, the complex is composed of two ATP-binding proteins (PstB), two transmembrane proteins (PstC and PstA) and a solute-binding protein (PstS).

It is found in the cell membrane. It localises to the secreted. Functionally, functions in inorganic phosphate uptake, a phosphate-binding protein, although probably not the main uptake protein under phosphate starvation. Part of the ABC transporter complex PstSACB involved in phosphate import. A host TLR2 agonist (toll-like receptor), requires both host TLR1 and TLR2 as coreceptors. The protein is Phosphate-binding protein PstS1 (pstS1) of Mycobacterium bovis (strain BCG / Pasteur 1173P2).